Here is a 507-residue protein sequence, read N- to C-terminus: Myocyte-specific enhancer factor 2A (507 aa).

The region spanning R3–Y57 is the MADS-box domain. A Phosphoserine modification is found at K30. Positions A58–E86 form a DNA-binding region, mef2-type. The residue at position 59 (S59) is a Phosphoserine; by CK2. S98 carries the phosphoserine modification. The segment covering T173–P183 has biased composition (low complexity). The disordered stretch occupies residues T173–F229. The segment covering L209 to F229 has biased composition (polar residues). S235 is modified (phosphoserine). The disordered stretch occupies residues G243–K270. An N6-acetyllysine modification is found at K249. S255 is subject to Phosphoserine; by MAPK14. The tract at residues M266–G283 is required for interaction with MAPKs. The tract at residues S289 to L296 is beta domain. Phosphothreonine; by MAPK7 and MAPK14 occurs at positions 312 and 319. T312 carries the post-translational modification Phosphothreonine; by NLK. S355 is subject to Phosphoserine; by MAPK7. Positions N397–T507 are disordered. K403 carries the post-translational modification N6-acetyllysine; alternate. K403 is covalently cross-linked (Glycyl lysine isopeptide (Lys-Gly) (interchain with G-Cter in SUMO); alternate). S408 is modified (phosphoserine; by CDK5). Phosphothreonine is present on T415. The span at Q420–Q429 shows a compositional bias: low complexity. The segment covering Q430 to Q445 has biased composition (pro residues). S453 is modified (phosphoserine; by MAPK). Positions S453 to D466 are enriched in low complexity. 2 stretches are compositionally biased toward basic and acidic residues: residues G467 to F477 and N488 to T507.

It belongs to the MEF2 family. Binds DNA as a homo- or heterodimer. Dimerizes with MEF2D. Interacts with HDAC7. Interacts with PIAS1; the interaction enhances sumoylation. Interacts with HDAC4, HDAC9 and SLC2A4RG. Interacts (via the N-terminal) with MAPK7; the interaction results in the phosphorylation and transcriptional activity of MEF2A. Post-translationally, constitutive phosphorylation on Ser-408 promotes Lys-403 sumoylation thus preventing acetylation at this site. Dephosphorylation on Ser-408 by PPP3CA upon neuron depolarization promotes a switch from sumoylation to acetylation on residue Lys-403 leading to inhibition of dendrite claw differentiation. Phosphorylation on Thr-312 and Thr-319 are the main sites involved in p38 MAPK signaling and activate transcription. Phosphorylated on these sites by MAPK14/p38alpha and MAPK11/p38beta, but not by MAPK13/p38delta nor by MAPK12/p38gamma. Phosphorylation on Ser-408 by CDK5 induced by neurotoxicity inhibits MEF2A transcriptional activation leading to apoptosis of cortical neurons. Phosphorylation on Thr-312, Thr-319 and Ser-355 can be induced by EGF. Sumoylation on Lys-403 is enhanced by PIAS1 and represses transcriptional activity. Phosphorylation on Ser-408 is required for sumoylation. Has no effect on nuclear location nor on DNA binding. Sumoylated with SUMO1 and, to a lesser extent with SUMO2 and SUMO3. PIASx facilitates sumoylation in postsynaptic dendrites in the cerebellar cortex and promotes their morphogenesis. In terms of processing, acetylation on Lys-403 activates transcriptional activity. Acetylated by p300 on several sites in diffentiating myocytes. Acetylation on Lys-4 increases DNA binding and transactivation. Hyperacetylation by p300 leads to enhanced cardiac myocyte growth and heart failure. Post-translationally, proteolytically cleaved in cerebellar granule neurons on several sites by caspase 3 and caspase 7 following neurotoxicity. Preferentially cleaves the CDK5-mediated hyperphosphorylated form which leads to neuron apoptosis and transcriptional inactivation. Isoform MEF2 and isoform MEFA are expressed only in skeletal and cardiac muscle and in the brain. Isoform RSRFC4 and isoform RSRFC9 are expressed in all tissues examined.

It is found in the nucleus. Its function is as follows. Transcriptional activator which binds specifically to the MEF2 element, 5'-YTA[AT](4)TAR-3', found in numerous muscle-specific genes. Also involved in the activation of numerous growth factor- and stress-induced genes. Mediates cellular functions not only in skeletal and cardiac muscle development, but also in neuronal differentiation and survival. Plays diverse roles in the control of cell growth, survival and apoptosis via p38 MAPK signaling in muscle-specific and/or growth factor-related transcription. In cerebellar granule neurons, phosphorylated and sumoylated MEF2A represses transcription of NUR77 promoting synaptic differentiation. Associates with chromatin to the ZNF16 promoter. This Homo sapiens (Human) protein is Myocyte-specific enhancer factor 2A (MEF2A).